A 396-amino-acid chain; its full sequence is 1-deoxy-D-xylulose 5-phosphate reductoisomerase (396 aa).

Residues threonine 10, glycine 11, serine 12, isoleucine 13, glycine 36, lysine 37, asparagine 38, and asparagine 124 each contribute to the NADPH site. Lysine 125 lines the 1-deoxy-D-xylulose 5-phosphate pocket. Glutamate 126 is a binding site for NADPH. Mn(2+) is bound at residue aspartate 150. 4 residues coordinate 1-deoxy-D-xylulose 5-phosphate: serine 151, glutamate 152, serine 186, and histidine 209. Position 152 (glutamate 152) interacts with Mn(2+). NADPH is bound at residue glycine 215. Residues serine 222, asparagine 227, lysine 228, and glutamate 231 each contribute to the 1-deoxy-D-xylulose 5-phosphate site. Glutamate 231 contacts Mn(2+).

The protein belongs to the DXR family. The cofactor is Mg(2+). It depends on Mn(2+) as a cofactor.

The enzyme catalyses 2-C-methyl-D-erythritol 4-phosphate + NADP(+) = 1-deoxy-D-xylulose 5-phosphate + NADPH + H(+). The protein operates within isoprenoid biosynthesis; isopentenyl diphosphate biosynthesis via DXP pathway; isopentenyl diphosphate from 1-deoxy-D-xylulose 5-phosphate: step 1/6. Its function is as follows. Catalyzes the NADPH-dependent rearrangement and reduction of 1-deoxy-D-xylulose-5-phosphate (DXP) to 2-C-methyl-D-erythritol 4-phosphate (MEP). In Actinobacillus pleuropneumoniae serotype 5b (strain L20), this protein is 1-deoxy-D-xylulose 5-phosphate reductoisomerase.